A 493-amino-acid chain; its full sequence is ATP-dependent RNA helicase dbp3 (493 aa).

The interval 1-38 is disordered; the sequence is MTKRDYQNDTTAESRPTKKSKGEKKVKETKEKKEKKVK. Positions 23–34 are enriched in basic and acidic residues; sequence EKKVKETKEKKE. The Q motif motif lies at 97–105; the sequence is SFKSPTSIQ. The Helicase ATP-binding domain maps to 109-285; that stretch reads WPLLFGGRDV…STFMSSPVTV (177 aa). 122–129 lines the ATP pocket; it reads AETGSGKT. Positions 232–235 match the DEAD box motif; it reads DEAD. The Helicase C-terminal domain occupies 316–462; sequence RLVQLLKQHQ…EVPEELLKFG (147 aa).

It belongs to the DEAD box helicase family. DDX5/DBP2 subfamily.

The protein resides in the nucleus. The protein localises to the nucleolus. It carries out the reaction ATP + H2O = ADP + phosphate + H(+). Functionally, ATP-dependent RNA helicase required for 60S ribosomal subunit synthesis. Involved in efficient pre-rRNA processing, predominantly at site A3, which is necessary for the normal formation of 25S and 5.8S rRNAs. This Aspergillus terreus (strain NIH 2624 / FGSC A1156) protein is ATP-dependent RNA helicase dbp3 (dbp3).